We begin with the raw amino-acid sequence, 410 residues long: Iron-sulfur cluster assembly SufBD family protein MTH1150 homolog (410 aa).

It belongs to the iron-sulfur cluster assembly SufBD family.

The sequence is that of Iron-sulfur cluster assembly SufBD family protein MTH1150 homolog from Methanothermobacter thermautotrophicus (strain Winter) (Methanobacterium thermoautotrophicum).